Here is a 429-residue protein sequence, read N- to C-terminus: Protein AST1 (429 aa).

In terms of assembly, interacts with PMA1.

Its subcellular location is the cell membrane. The protein resides in the membrane raft. It is found in the golgi apparatus membrane. It localises to the late endosome membrane. Its function is as follows. Lipid raft-associated protein involved in the targeting of PMA1 from Golgi to the plasma membrane. May induce clustering of PMA1, which facilitates partition of PMA1 into lipid rafts after leaving the ER and its transport to the cell surface. The protein is Protein AST1 of Saccharomyces cerevisiae (strain ATCC 204508 / S288c) (Baker's yeast).